A 375-amino-acid polypeptide reads, in one-letter code: Arabinose metabolism transcriptional repressor (375 aa).

Residues 1–70 (METKYNFVKQ…QGAGTFCADR (70 aa)) enclose the HTH gntR-type domain. The segment at residues 30–49 (ENELMKEYNVSRHTVRKAID) is a DNA-binding region (H-T-H motif).

The protein localises to the cytoplasm. Transcriptional repressor of the arabinose utilization genes. This chain is Arabinose metabolism transcriptional repressor (araR), found in Halalkalibacterium halodurans (strain ATCC BAA-125 / DSM 18197 / FERM 7344 / JCM 9153 / C-125) (Bacillus halodurans).